The following is a 348-amino-acid chain: S-adenosylmethionine:tRNA ribosyltransferase-isomerase (348 aa).

This sequence belongs to the QueA family. In terms of assembly, monomer.

Its subcellular location is the cytoplasm. The catalysed reaction is 7-aminomethyl-7-carbaguanosine(34) in tRNA + S-adenosyl-L-methionine = epoxyqueuosine(34) in tRNA + adenine + L-methionine + 2 H(+). It participates in tRNA modification; tRNA-queuosine biosynthesis. In terms of biological role, transfers and isomerizes the ribose moiety from AdoMet to the 7-aminomethyl group of 7-deazaguanine (preQ1-tRNA) to give epoxyqueuosine (oQ-tRNA). The chain is S-adenosylmethionine:tRNA ribosyltransferase-isomerase from Amoebophilus asiaticus (strain 5a2).